The primary structure comprises 523 residues: MVKINIKSSTDNKFDVDVELGITVADFKKVIATKCSIPADQQRIIYSGRILKDHQTLDEIKIQDGHTVHLVKGAAPPPPPPVEQQVPTPSNTQPQGIPGVPQNINDMMNNPMIQEMFNSRMMDSLLDNPDIFRDMMMGNPEMREVLNNNPEMAQMLSDPRQLRQSLEMMRNPELMREMMRNADRAMINIENHPEGFNLLRRMYTDIQEPLMNAANQQAASQNQTNSNPIQTNTDANPNSQPLPNPWSTNSSSTSSNPTSSSPSSRPTTGSSTNTGASNPWASMFSGGGGGMGGGTNNTGTNNTGSTNNTGASNPWASMFGGGGGGMGGMGGMEGMLGMDPERVQQLLNNPVAQQMMQRLMSDPAMMQQMITMNPQLRQMMDSNPQLREAMNNPEFLNMMTNPENMNAMMQLQQAMGTLRNNGVFPGGMGGMGGMGGMGGMGGMGGMDFSQFGNMFGGMGGMGGMGNNNSSTTRPPVNQEPPEQRFRLQLEQLEELGFVDRAANISALTSTNGNINLAIDRLLR.

Residues 2–77 (VKINIKSSTD…VHLVKGAAPP (76 aa)) form the Ubiquitin-like domain. The tract at residues 70–99 (LVKGAAPPPPPPVEQQVPTPSNTQPQGIPG) is disordered. 2 consecutive STI1 domains span residues 100 to 135 (VPQN…FRDM) and 139 to 178 (NPEM…MREM). Residues 215–227 (NQQAASQNQTNSN) show a composition bias toward low complexity. The disordered stretch occupies residues 215-325 (NQQAASQNQT…ASMFGGGGGG (111 aa)). A compositionally biased stretch (polar residues) spans 228–241 (PIQTNTDANPNSQP). Residues 245-278 (PWSTNSSSTSSNPTSSSPSSRPTTGSSTNTGASN) show a composition bias toward low complexity. The segment covering 285-296 (SGGGGGMGGGTN) has biased composition (gly residues). The segment covering 297-310 (NTGTNNTGSTNNTG) has biased composition (low complexity). 2 STI1 domains span residues 339-380 (DPER…RQMM) and 383-415 (NPQL…QQAM). One can recognise a UBA domain in the interval 480–523 (PPEQRFRLQLEQLEELGFVDRAANISALTSTNGNINLAIDRLLR).

Stable protein which acts as an antagonist of nosA by repressing cellular differentiation after the tight-aggregate stage, when cells differentiate into two precursor cell types, prespore and prestalk cells, prior to the formation of fruiting bodies. This Dictyostelium discoideum (Social amoeba) protein is Ubiquilin (ubqln).